Consider the following 217-residue polypeptide: U exon protein (217 aa).

Disordered regions lie at residues 79–113 and 171–217; these read ISGEGNGQSGRGAARNHPRARTRCGATSPNHGGRV and KEAP…WQRR. Over residues 188–197 the composition is skewed to basic residues; the sequence is RGQRGRKRRC. Over residues 202–217 the composition is skewed to polar residues; that stretch reads GGFQQPTGANQAWQRR.

It belongs to the adenoviridae U exon protein family.

It is found in the host nucleus. Its subcellular location is the host nucleoplasm. The protein localises to the host nucleolus. Its function is as follows. Might play a role in viral replication since it is associated with viral replication centers. Seems to have an effect on DBP localization. The sequence is that of U exon protein from Human adenovirus C serotype 5 (HAdV-5).